The following is a 148-amino-acid chain: 3-dehydroquinate dehydratase (148 aa).

The active-site Proton acceptor is tyrosine 23. Positions 75, 81, and 88 each coordinate substrate. Residue histidine 101 is the Proton donor of the active site. Residues 102-103 (LS) and arginine 112 each bind substrate.

It belongs to the type-II 3-dehydroquinase family. As to quaternary structure, homododecamer.

The catalysed reaction is 3-dehydroquinate = 3-dehydroshikimate + H2O. Its pathway is metabolic intermediate biosynthesis; chorismate biosynthesis; chorismate from D-erythrose 4-phosphate and phosphoenolpyruvate: step 3/7. In terms of biological role, catalyzes a trans-dehydration via an enolate intermediate. This chain is 3-dehydroquinate dehydratase, found in Xylella fastidiosa (strain 9a5c).